The primary structure comprises 129 residues: UPF0146 protein VNG_2609C (129 aa).

It belongs to the UPF0146 family.

The protein is UPF0146 protein VNG_2609C of Halobacterium salinarum (strain ATCC 700922 / JCM 11081 / NRC-1) (Halobacterium halobium).